The following is a 210-amino-acid chain: Molybdenum cofactor guanylyltransferase (210 aa).

Residues leucine 14–glycine 16, lysine 27, asparagine 55, aspartate 73, and aspartate 108 contribute to the GTP site. Residue aspartate 108 participates in Mg(2+) binding.

The protein belongs to the MobA family. In terms of assembly, monomer. Requires Mg(2+) as cofactor.

It is found in the cytoplasm. The enzyme catalyses Mo-molybdopterin + GTP + H(+) = Mo-molybdopterin guanine dinucleotide + diphosphate. In terms of biological role, transfers a GMP moiety from GTP to Mo-molybdopterin (Mo-MPT) cofactor (Moco or molybdenum cofactor) to form Mo-molybdopterin guanine dinucleotide (Mo-MGD) cofactor. This chain is Molybdenum cofactor guanylyltransferase, found in Rhodopseudomonas palustris (strain BisB5).